A 189-amino-acid polypeptide reads, in one-letter code: Isopentenyl-diphosphate Delta-isomerase (189 aa).

Mn(2+) contacts are provided by H27 and H34. Residues 32–171 (PLHFAFSTYI…PFVFSPWLVD (140 aa)) enclose the Nudix hydrolase domain. C69 is an active-site residue. Position 69 (C69) interacts with Mg(2+). Residue H71 coordinates Mn(2+). E89 serves as a coordination point for Mg(2+). The Mn(2+) site is built by E119 and E121. Residue E121 is part of the active site.

Belongs to the IPP isomerase type 1 family. Requires Mg(2+) as cofactor. Mn(2+) is required as a cofactor.

The protein resides in the cytoplasm. It catalyses the reaction isopentenyl diphosphate = dimethylallyl diphosphate. It functions in the pathway isoprenoid biosynthesis; dimethylallyl diphosphate biosynthesis; dimethylallyl diphosphate from isopentenyl diphosphate: step 1/1. In terms of biological role, catalyzes the 1,3-allylic rearrangement of the homoallylic substrate isopentenyl (IPP) to its highly electrophilic allylic isomer, dimethylallyl diphosphate (DMAPP). The sequence is that of Isopentenyl-diphosphate Delta-isomerase from Corynebacterium glutamicum (strain ATCC 13032 / DSM 20300 / JCM 1318 / BCRC 11384 / CCUG 27702 / LMG 3730 / NBRC 12168 / NCIMB 10025 / NRRL B-2784 / 534).